We begin with the raw amino-acid sequence, 231 residues long: 7-cyano-7-deazaguanine synthase (231 aa).

11–21 (LSGGLDSATTM) lines the ATP pocket. Residues Cys-195, Cys-205, Cys-208, and Cys-211 each contribute to the Zn(2+) site.

It belongs to the QueC family. It depends on Zn(2+) as a cofactor.

It carries out the reaction 7-carboxy-7-deazaguanine + NH4(+) + ATP = 7-cyano-7-deazaguanine + ADP + phosphate + H2O + H(+). Its pathway is purine metabolism; 7-cyano-7-deazaguanine biosynthesis. Functionally, catalyzes the ATP-dependent conversion of 7-carboxy-7-deazaguanine (CDG) to 7-cyano-7-deazaguanine (preQ(0)). This is 7-cyano-7-deazaguanine synthase from Syntrophus aciditrophicus (strain SB).